The following is a 429-amino-acid chain: ATP-dependent RNA helicase RhlB (429 aa).

The short motif at Glu9–Ala37 is the Q motif element. One can recognise a Helicase ATP-binding domain in the interval Leu40–Val219. Ala53–Thr60 contacts ATP. Residues Asp165–Asp168 carry the DEAD box motif. The Helicase C-terminal domain maps to Lys243–Leu390. The tract at residues Ala395–Ser429 is disordered.

It belongs to the DEAD box helicase family. RhlB subfamily. In terms of assembly, component of the RNA degradosome, which is a multiprotein complex involved in RNA processing and mRNA degradation.

The protein localises to the cytoplasm. The enzyme catalyses ATP + H2O = ADP + phosphate + H(+). In terms of biological role, DEAD-box RNA helicase involved in RNA degradation. Has RNA-dependent ATPase activity and unwinds double-stranded RNA. This is ATP-dependent RNA helicase RhlB from Aeromonas salmonicida (strain A449).